Here is an 84-residue protein sequence, read N- to C-terminus: ATP synthase subunit c (84 aa).

Helical transmembrane passes span 9–29 (IFGS…GFSL) and 54–74 (IVAG…LLFI).

This sequence belongs to the ATPase C chain family. In terms of assembly, F-type ATPases have 2 components, F(1) - the catalytic core - and F(0) - the membrane proton channel. F(1) has five subunits: alpha(3), beta(3), gamma(1), delta(1), epsilon(1). F(0) has three main subunits: a(1), b(2) and c(10-14). The alpha and beta chains form an alternating ring which encloses part of the gamma chain. F(1) is attached to F(0) by a central stalk formed by the gamma and epsilon chains, while a peripheral stalk is formed by the delta and b chains.

Its subcellular location is the cell inner membrane. Its function is as follows. F(1)F(0) ATP synthase produces ATP from ADP in the presence of a proton or sodium gradient. F-type ATPases consist of two structural domains, F(1) containing the extramembraneous catalytic core and F(0) containing the membrane proton channel, linked together by a central stalk and a peripheral stalk. During catalysis, ATP synthesis in the catalytic domain of F(1) is coupled via a rotary mechanism of the central stalk subunits to proton translocation. Key component of the F(0) channel; it plays a direct role in translocation across the membrane. A homomeric c-ring of between 10-14 subunits forms the central stalk rotor element with the F(1) delta and epsilon subunits. This Histophilus somni (strain 129Pt) (Haemophilus somnus) protein is ATP synthase subunit c.